Reading from the N-terminus, the 622-residue chain is Probable ATP-citrate synthase (622 aa).

Residues 228–248 (ALRY…ELGG) and 279–305 (FPTE…KNKA) each bind ATP. Glu245 contributes to the Mg(2+) binding site. His287 serves as the catalytic Tele-phosphohistidine intermediate. 306–316 (LREAGAVVPTS) serves as a coordination point for CoA.

This sequence in the N-terminal section; belongs to the succinate/malate CoA ligase beta subunit family. It in the C-terminal section; belongs to the succinate/malate CoA ligase alpha subunit family. Homotetramer.

It localises to the cytoplasm. The enzyme catalyses oxaloacetate + acetyl-CoA + ADP + phosphate = citrate + ATP + CoA. In terms of biological role, catalyzes the cleavage of citrate into oxaloacetate and acetyl-CoA, the latter serving as common substrate in multiple biochemical reactions in protein, carbohydrate and lipid metabolism. In Dictyostelium discoideum (Social amoeba), this protein is Probable ATP-citrate synthase (acly).